The chain runs to 453 residues: MISLKDAIKLSSSDIVKLRKNLKDKIKDNRQLGAYIEQLTNSDISDEYAGVPIAIKDNIQVKNWSITSCSKILQGYVAPYHATVVEKLLKAGLAPFGRTNMDEFAMGSTTESSFYGKTLNPLDHTRVPGGSSGGSAAAVSAGLAIAALGSDTGGSIRQPAAFCGCVGFKPTYGRVSRYGLGAYSSSLDQIGPITRSVEDAALLYDIIAGHDPKDSTSSNLENISTSDKLNSDRKLTIAVIKNYVDGASQDVKDSLYKVVDKLKEAGHNIIYKDLSNSKYDIAAYYIIATAEASANLSRYDGVRYGRRADSNSLGQMYSKTRGEGFGVEVQRRMLLGTFVLSSGYYDAYYIKAQKARAFIKLEYEEILNEADIMLMPVAPSVAYKFGELSDPLSAYLSDIYTIGVNLAGLPAITVPVQSDKNGLNISAQLIGGAWKEQDVLDAAFGLEKLVKGN.

Active-site charge relay system residues include K56 and S131. The active-site Acyl-ester intermediate is the S155.

The protein belongs to the amidase family. GatA subfamily. Heterotrimer of A, B and C subunits.

It carries out the reaction L-glutamyl-tRNA(Gln) + L-glutamine + ATP + H2O = L-glutaminyl-tRNA(Gln) + L-glutamate + ADP + phosphate + H(+). Allows the formation of correctly charged Gln-tRNA(Gln) through the transamidation of misacylated Glu-tRNA(Gln) in organisms which lack glutaminyl-tRNA synthetase. The reaction takes place in the presence of glutamine and ATP through an activated gamma-phospho-Glu-tRNA(Gln). The polypeptide is Glutamyl-tRNA(Gln) amidotransferase subunit A (Campylobacter fetus subsp. fetus (strain 82-40)).